Here is a 339-residue protein sequence, read N- to C-terminus: GATA transcription factor 5 (339 aa).

Disordered stretches follow at residues 68–88 (MVRV…RSSD), 126–145 (EYSG…WLTG), 163–206 (PVPA…PSSP), and 221–242 (ERPP…SGEL). Residues 126 to 136 (EYSGPNLTGTP) show a composition bias toward polar residues. The Nuclear localization signal signature appears at 167–174 (KARSKRNR). Low complexity predominate over residues 181 to 206 (SLGSSSSSGPSSSGSTSSSSSGPSSP). A GATA-type zinc finger spans residues 245–299 (LQPQRKCSHCGVQKTPQWRAGPMGAKTLCNACGVRYKSGRLLPEYRPACSPTFSS). The interval 314-339 (RKKEPTSDNETGLNQLVQSPQAVPSF) is disordered. A compositionally biased stretch (polar residues) spans 321-339 (DNETGLNQLVQSPQAVPSF).

This sequence belongs to the type IV zinc-finger family. Class A subfamily.

Its subcellular location is the nucleus. Functionally, transcriptional activator that specifically binds 5'-GATA-3' or 5'-GAT-3' motifs within gene promoters. May be involved in the regulation of some light-responsive genes. The sequence is that of GATA transcription factor 5 (GATA5) from Arabidopsis thaliana (Mouse-ear cress).